A 445-amino-acid polypeptide reads, in one-letter code: Xylose isomerase (445 aa).

Active-site residues include His-109 and Asp-112. Positions 240, 276, 279, 304, 315, 317, and 347 each coordinate Mg(2+).

The protein belongs to the xylose isomerase family. In terms of assembly, homotetramer. Requires Mg(2+) as cofactor.

The protein resides in the cytoplasm. It catalyses the reaction alpha-D-xylose = alpha-D-xylulofuranose. The protein is Xylose isomerase of Xanthomonas oryzae pv. oryzae (strain MAFF 311018).